A 1226-amino-acid polypeptide reads, in one-letter code: Integrin alpha pat-2 (1226 aa).

The N-terminal stretch at 1–25 (MREGSFPRRIGLLLGLLGLLAGVAT) is a signal peptide. Residues 26-1154 (FNIDTKNVVV…IASEEGRDLP (1129 aa)) are Extracellular-facing. 7 FG-GAP repeats span residues 27–94 (NIDT…TCRE), 108–171 (NGSH…NAEE), 178–233 (EPAR…TDRP), 234–290 (NTEY…MMIN), 291–345 (LTDE…KPQY), 362–421 (GKQI…GVRE), and 425–488 (QKIE…PESA). Residues Asn-108, Asn-228, and Asn-290 are each glycosylated (N-linked (GlcNAc...) asparagine). Asn-608 carries an N-linked (GlcNAc...) asparagine glycan. The Cell attachment site signature appears at 620 to 622 (RGD). A glycan (N-linked (GlcNAc...) asparagine) is linked at Asn-679. The segment at 709–733 (SVGGDGSKSAPACSPTSDEPDSDGK) is disordered. N-linked (GlcNAc...) asparagine glycans are attached at residues Asn-775 and Asn-819. Disordered stretches follow at residues 898 to 958 (LRIT…HVYE) and 982 to 1040 (DYEY…ARFS). Residues 920–931 (REEDDESYEDET) are compositionally biased toward acidic residues. Over residues 932–951 (TTQSQSTRHQSTQHQTHHQS) the composition is skewed to low complexity. Acidic residues predominate over residues 985 to 1005 (YIPDDQEYDGDDFEEEDDEDF). Basic residues predominate over residues 1010 to 1026 (SKRVKRNPTPKKKKKGG). The span at 1027–1040 (EHRGEPRSDKARFS) shows a compositional bias: basic and acidic residues. The helical transmembrane segment at 1155–1177 (WWLYLLAILIGLAILILLILLLW) threads the bilayer. The Cytoplasmic segment spans residues 1178–1226 (RCGFFKRNRPPTEHAELRADRQPNAQYADSQSRYTSQDQYNQGRHGQML). The segment at 1191–1226 (HAELRADRQPNAQYADSQSRYTSQDQYNQGRHGQML) is disordered. The span at 1200–1226 (PNAQYADSQSRYTSQDQYNQGRHGQML) shows a compositional bias: polar residues.

This sequence belongs to the integrin alpha chain family. Heterodimer of an alpha and a beta subunit. Interacts with beta subunit pat-3. Interacts with dep-1. Component of an integrin containing attachment complex, composed of at least pat-2, pat-3, pat-4, pat-6, unc-52, unc-97 and unc-112. As to expression, expressed in body-wall muscle cells, distal tip cells, and vulval tissue.

Its subcellular location is the membrane. Required for muscle development probably through the regulation of the actin-myosin cytoskeleton. Component of an integrin containing attachment complex, which is required for muscle maintenance. During the formation of neuromuscular junctions at the larval stage, negatively regulates membrane protrusion from body wall muscles, probably through lamins such as epi-1, lam-2 and unc-52. Required for distal tip cell migration and dorsal pathfinding. Required for egg-laying. May play a role in cell motility and cell-cell interactions. Plays a role in vulval development. Probably within the alpha pat-2/beta pat-3 integrin receptor complex, plays a role in the negative regulation of let-23 signaling and vulval induction. This is probably partly by restricting the mobility of the let-23 receptor on the plasma membrane of vulval cells which thereby attenuates let-23 signaling. In Caenorhabditis elegans, this protein is Integrin alpha pat-2.